The primary structure comprises 584 residues: Negative regulator of RAS-cAMP pathway (584 aa).

T25 is modified (phosphothreonine). 5 disordered regions span residues P95–S167, P209–S279, S291–N320, N343–V366, and S381–T432. Polar residues-rich tracts occupy residues P114–M127, C229–Q254, and N267–T278. Phosphoserine is present on residues S247 and S276. The segment covering F307–N320 has biased composition (acidic residues). The segment covering N343–H363 has biased composition (polar residues). Residues S381–E392 show a composition bias toward low complexity. Polar residues predominate over residues V398–T432. A Phosphoserine modification is found at S442. A Phosphoserine; by PKA modification is found at S518. A disordered region spans residues D551 to I584. Residues N557–N568 are compositionally biased toward low complexity.

Its subcellular location is the nucleus. In terms of biological role, negative regulator of Ras-cAMP pathway. Involved in transcriptional regulation of galactose-inducible genes. This Saccharomyces cerevisiae (strain ATCC 204508 / S288c) (Baker's yeast) protein is Negative regulator of RAS-cAMP pathway (MKS1).